The primary structure comprises 159 residues: Transcriptional repressor NrdR (159 aa).

Residues 3–34 (CPFCEYNGTRVLDSRPFNHNKSIRRRRECEAC) fold into a zinc finger. An ATP-cone domain is found at 49–139 (LLIVKKDGTR…VYRQFKDINV (91 aa)).

This sequence belongs to the NrdR family. It depends on Zn(2+) as a cofactor.

In terms of biological role, negatively regulates transcription of bacterial ribonucleotide reductase nrd genes and operons by binding to NrdR-boxes. The chain is Transcriptional repressor NrdR from Brevibacillus brevis (strain 47 / JCM 6285 / NBRC 100599).